The sequence spans 339 residues: DNA-directed RNA polymerase subunit alpha (339 aa).

Positions 1–233 (MVREEVAGST…DLFLPFLHAE (233 aa)) are alpha N-terminal domain (alpha-NTD). The interval 264–339 (KKGIPLNCIF…IDLLKNKLSF (76 aa)) is alpha C-terminal domain (alpha-CTD).

Belongs to the RNA polymerase alpha chain family. As to quaternary structure, in plastids the minimal PEP RNA polymerase catalytic core is composed of four subunits: alpha, beta, beta', and beta''. When a (nuclear-encoded) sigma factor is associated with the core the holoenzyme is formed, which can initiate transcription.

The protein localises to the plastid. It is found in the chloroplast. It carries out the reaction RNA(n) + a ribonucleoside 5'-triphosphate = RNA(n+1) + diphosphate. Functionally, DNA-dependent RNA polymerase catalyzes the transcription of DNA into RNA using the four ribonucleoside triphosphates as substrates. This Festucopsis festucoides protein is DNA-directed RNA polymerase subunit alpha.